Consider the following 436-residue polypeptide: Eukaryotic peptide chain release factor subunit 1-1 (436 aa).

This sequence belongs to the eukaryotic release factor 1 family. As to quaternary structure, heterodimer of two subunits, one of which binds GTP.

Its subcellular location is the cytoplasm. In terms of biological role, directs the termination of nascent peptide synthesis (translation) in response to the termination codons UAA, UAG and UGA. Modulates plant growth and development. In Arabidopsis thaliana (Mouse-ear cress), this protein is Eukaryotic peptide chain release factor subunit 1-1 (ERF1-1).